The following is a 282-amino-acid chain: Probable ribosomal RNA small subunit methyltransferase A (282 aa).

S-adenosyl-L-methionine-binding residues include His24, Leu26, Gly51, Glu72, Asp100, and Asn115.

It belongs to the class I-like SAM-binding methyltransferase superfamily. rRNA adenine N(6)-methyltransferase family. RsmA subfamily.

Its subcellular location is the cytoplasm. Specifically dimethylates two adjacent adenosines in the loop of a conserved hairpin near the 3'-end of 16S rRNA in the 30S particle. May play a critical role in biogenesis of 30S subunits. In Halobacterium salinarum (strain ATCC 29341 / DSM 671 / R1), this protein is Probable ribosomal RNA small subunit methyltransferase A.